Here is a 229-residue protein sequence, read N- to C-terminus: Lipoprotein-releasing system ATP-binding protein LolD (229 aa).

Residues 7–229 (LKCKNVTKTY…KNGKLYKKNL (223 aa)) enclose the ABC transporter domain. 43-50 (GDSGSGKS) is a binding site for ATP.

Belongs to the ABC transporter superfamily. Lipoprotein translocase (TC 3.A.1.125) family. As to quaternary structure, the complex is composed of two ATP-binding proteins (LolD) and two transmembrane proteins (LolC and LolE).

It localises to the cell membrane. In terms of biological role, part of the ABC transporter complex LolCDE involved in the translocation of lipoproteins, in an ATP-dependent manner. This chain is Lipoprotein-releasing system ATP-binding protein LolD, found in Wigglesworthia glossinidia brevipalpis.